Consider the following 341-residue polypeptide: L-threonine 3-dehydrogenase (341 aa).

Residue Cys38 participates in Zn(2+) binding. Active-site charge relay system residues include Thr40 and His43. Positions 63, 64, 93, 96, 99, and 107 each coordinate Zn(2+). NAD(+)-binding positions include Ile175, Asp195, Arg200, 262-264 (LGI), and 286-287 (IY).

Belongs to the zinc-containing alcohol dehydrogenase family. In terms of assembly, homotetramer. The cofactor is Zn(2+).

The protein resides in the cytoplasm. It carries out the reaction L-threonine + NAD(+) = (2S)-2-amino-3-oxobutanoate + NADH + H(+). The protein operates within amino-acid degradation; L-threonine degradation via oxydo-reductase pathway; glycine from L-threonine: step 1/2. In terms of biological role, catalyzes the NAD(+)-dependent oxidation of L-threonine to 2-amino-3-ketobutyrate. This chain is L-threonine 3-dehydrogenase, found in Shigella sonnei (strain Ss046).